The primary structure comprises 434 residues: 3-ketoacyl-CoA thiolase A, peroxisomal (434 aa).

The transit peptide at 1–36 directs the protein to the peroxisome; that stretch reads MSESVGRTSAMHRLQVVLGHLAGRPESSSALQAAPC. Positions 11-36 are PTS2-type peroxisomal targeting signal; that stretch reads MHRLQVVLGHLAGRPESSSALQAAPC. Residue C133 is the Acyl-thioester intermediate of the active site. An N6-acetyllysine mark is found at K183 and K244. Catalysis depends on proton acceptor residues H387 and C418.

It belongs to the thiolase-like superfamily. Thiolase family. As to quaternary structure, homodimer. Interacts (via PTS2-type peroxisomal targeting signal region) with PEX7; leading to its translocation into peroxisomes.

The protein localises to the peroxisome. It catalyses the reaction an acyl-CoA + acetyl-CoA = a 3-oxoacyl-CoA + CoA. The enzyme catalyses 2 acetyl-CoA = acetoacetyl-CoA + CoA. It carries out the reaction tetradecanoyl-CoA + acetyl-CoA = 3-oxohexadecanoyl-CoA + CoA. The catalysed reaction is hexanoyl-CoA + acetyl-CoA = 3-oxooctanoyl-CoA + CoA. It catalyses the reaction 3-oxohexadecanedioyl-CoA + CoA = tetradecanedioyl-CoA + acetyl-CoA. The enzyme catalyses 3-oxo-(6Z,9Z,12Z,15Z,18Z,21Z)-tetracosahexaenoyl-CoA + CoA = (4Z,7Z,10Z,13Z,16Z,19Z)-docosahexaenoyl-CoA + acetyl-CoA. Its pathway is lipid metabolism; peroxisomal fatty acid beta-oxidation. Its function is as follows. Responsible for the thiolytic cleavage of straight chain 3-keto fatty acyl-CoAs (3-oxoacyl-CoAs). Plays an important role in fatty acid peroxisomal beta-oxidation. Catalyzes the cleavage of short, medium, long, and very long straight chain 3-oxoacyl-CoAs. Medium chain straight 3-oxoacyl-CoAs are preferred substrates. This is 3-ketoacyl-CoA thiolase A, peroxisomal from Rattus norvegicus (Rat).